The following is a 306-amino-acid chain: Porphobilinogen deaminase (306 aa).

Cysteine 239 carries the S-(dipyrrolylmethanemethyl)cysteine modification.

Belongs to the HMBS family. In terms of assembly, monomer. It depends on dipyrromethane as a cofactor.

The enzyme catalyses 4 porphobilinogen + H2O = hydroxymethylbilane + 4 NH4(+). It functions in the pathway porphyrin-containing compound metabolism; protoporphyrin-IX biosynthesis; coproporphyrinogen-III from 5-aminolevulinate: step 2/4. Functionally, tetrapolymerization of the monopyrrole PBG into the hydroxymethylbilane pre-uroporphyrinogen in several discrete steps. The sequence is that of Porphobilinogen deaminase from Helicobacter pylori (strain P12).